A 137-amino-acid polypeptide reads, in one-letter code: Gonadotropin subunit beta-1 (137 aa).

Residues 1-24 form the signal peptide; sequence MYCTHLKTLQLVVMATLWVTPVRA. 5 disulfides stabilise this stretch: cysteine 32/cysteine 78, cysteine 46/cysteine 93, cysteine 55/cysteine 108, cysteine 59/cysteine 110, and cysteine 113/cysteine 120. Asparagine 36 carries an N-linked (GlcNAc...) asparagine glycan.

Belongs to the glycoprotein hormones subunit beta family. Heterodimer of an alpha and a beta chain.

The protein resides in the secreted. Functionally, involved in gametogenesis and steroidogenesis. This chain is Gonadotropin subunit beta-1 (cgba), found in Oncorhynchus masou (Cherry salmon).